Here is a 547-residue protein sequence, read N- to C-terminus: Undecaprenyl phosphate-alpha-4-amino-4-deoxy-L-arabinose arabinosyl transferase (547 aa).

Helical transmembrane passes span 1–21, 83–103, 111–131, 174–194, 205–225, 253–273, 286–306, 311–331, 346–366, 378–398, and 408–428; these read MKLT…LPLD, FASA…ALQL, FLAG…TYSV, FLTK…PYVI, FGPL…IAVH, APFW…LGLL, ISPE…FFSV, LLTY…ASAV, AWLN…LALS, GALA…FIQL, and SALC…QSLI.

This sequence belongs to the glycosyltransferase 83 family.

The protein resides in the cell inner membrane. It carries out the reaction 4-amino-4-deoxy-alpha-L-arabinopyranosyl di-trans,octa-cis-undecaprenyl phosphate + lipid IVA = lipid IIA + di-trans,octa-cis-undecaprenyl phosphate.. Its pathway is lipopolysaccharide metabolism; 4-amino-4-deoxy-beta-L-arabinose-lipid A biosynthesis. Functionally, catalyzes the transfer of the L-Ara4N moiety of the glycolipid undecaprenyl phosphate-alpha-L-Ara4N to lipid A. The modified arabinose is attached to lipid A and is required for resistance to polymyxin and cationic antimicrobial peptides. The sequence is that of Undecaprenyl phosphate-alpha-4-amino-4-deoxy-L-arabinose arabinosyl transferase from Aeromonas salmonicida (strain A449).